A 329-amino-acid polypeptide reads, in one-letter code: Protein Brevis radix-like 4 (329 aa).

The disordered stretch occupies residues Ser-12–Tyr-37. A BRX 1 domain is found at Arg-86–Asn-142. Residues Leu-151–Val-263 form a disordered region. 2 stretches are compositionally biased toward low complexity: residues Ser-222 to Gln-236 and Ala-243 to Ala-252. Residues Arg-253–Val-263 show a composition bias toward polar residues. The region spanning Thr-274 to Leu-329 is the BRX 2 domain.

It belongs to the BRX family.

The protein localises to the nucleus. This is Protein Brevis radix-like 4 (BRXL4) from Oryza sativa subsp. japonica (Rice).